The primary structure comprises 93 residues: Small ribosomal subunit protein uS19 (93 aa).

The protein belongs to the universal ribosomal protein uS19 family.

Protein S19 forms a complex with S13 that binds strongly to the 16S ribosomal RNA. The chain is Small ribosomal subunit protein uS19 from Wolinella succinogenes (strain ATCC 29543 / DSM 1740 / CCUG 13145 / JCM 31913 / LMG 7466 / NCTC 11488 / FDC 602W) (Vibrio succinogenes).